A 315-amino-acid polypeptide reads, in one-letter code: Aspartate carbamoyltransferase catalytic subunit (315 aa).

Residues Arg64 and Thr65 each coordinate carbamoyl phosphate. Lys92 lines the L-aspartate pocket. Residues Arg114, His142, and Gln145 each coordinate carbamoyl phosphate. L-aspartate is bound by residues Arg176 and Arg230. 2 residues coordinate carbamoyl phosphate: Gly271 and Pro272.

The protein belongs to the aspartate/ornithine carbamoyltransferase superfamily. ATCase family. As to quaternary structure, heterododecamer (2C3:3R2) of six catalytic PyrB chains organized as two trimers (C3), and six regulatory PyrI chains organized as three dimers (R2).

It catalyses the reaction carbamoyl phosphate + L-aspartate = N-carbamoyl-L-aspartate + phosphate + H(+). It functions in the pathway pyrimidine metabolism; UMP biosynthesis via de novo pathway; (S)-dihydroorotate from bicarbonate: step 2/3. Catalyzes the condensation of carbamoyl phosphate and aspartate to form carbamoyl aspartate and inorganic phosphate, the committed step in the de novo pyrimidine nucleotide biosynthesis pathway. This is Aspartate carbamoyltransferase catalytic subunit from Lawsonia intracellularis (strain PHE/MN1-00).